The primary structure comprises 358 residues: UDP-N-acetylglucosamine--N-acetylmuramyl-(pentapeptide) pyrophosphoryl-undecaprenol N-acetylglucosamine transferase (358 aa).

UDP-N-acetyl-alpha-D-glucosamine-binding positions include 11 to 13, asparagine 120, arginine 161, serine 188, and glutamine 282; that span reads TGG.

This sequence belongs to the glycosyltransferase 28 family. MurG subfamily.

Its subcellular location is the cell inner membrane. The enzyme catalyses di-trans,octa-cis-undecaprenyl diphospho-N-acetyl-alpha-D-muramoyl-L-alanyl-D-glutamyl-meso-2,6-diaminopimeloyl-D-alanyl-D-alanine + UDP-N-acetyl-alpha-D-glucosamine = di-trans,octa-cis-undecaprenyl diphospho-[N-acetyl-alpha-D-glucosaminyl-(1-&gt;4)]-N-acetyl-alpha-D-muramoyl-L-alanyl-D-glutamyl-meso-2,6-diaminopimeloyl-D-alanyl-D-alanine + UDP + H(+). Its pathway is cell wall biogenesis; peptidoglycan biosynthesis. Functionally, cell wall formation. Catalyzes the transfer of a GlcNAc subunit on undecaprenyl-pyrophosphoryl-MurNAc-pentapeptide (lipid intermediate I) to form undecaprenyl-pyrophosphoryl-MurNAc-(pentapeptide)GlcNAc (lipid intermediate II). In Synechococcus sp. (strain WH7803), this protein is UDP-N-acetylglucosamine--N-acetylmuramyl-(pentapeptide) pyrophosphoryl-undecaprenol N-acetylglucosamine transferase.